Reading from the N-terminus, the 864-residue chain is Leucine--tRNA ligase (864 aa).

The short motif at 42-52 (PYPSGKLHMGH) is the 'HIGH' region element. The 'KMSKS' region signature appears at 624-628 (KMSKS). Position 627 (Lys-627) interacts with ATP.

It belongs to the class-I aminoacyl-tRNA synthetase family.

The protein localises to the cytoplasm. It carries out the reaction tRNA(Leu) + L-leucine + ATP = L-leucyl-tRNA(Leu) + AMP + diphosphate. This chain is Leucine--tRNA ligase, found in Burkholderia mallei (strain ATCC 23344).